Consider the following 199-residue polypeptide: Probable molybdenum cofactor guanylyltransferase (199 aa).

Residues 8–10, Lys-20, Asp-65, and Asp-96 each bind GTP; that span reads LAG. Asp-96 is a Mg(2+) binding site.

It belongs to the MobA family. Mg(2+) serves as cofactor.

The protein resides in the cytoplasm. The enzyme catalyses Mo-molybdopterin + GTP + H(+) = Mo-molybdopterin guanine dinucleotide + diphosphate. Functionally, transfers a GMP moiety from GTP to Mo-molybdopterin (Mo-MPT) cofactor (Moco or molybdenum cofactor) to form Mo-molybdopterin guanine dinucleotide (Mo-MGD) cofactor. This is Probable molybdenum cofactor guanylyltransferase from Bacillus subtilis (strain 168).